A 35-amino-acid polypeptide reads, in one-letter code: Beta-theraphotoxin-Hlv1a (35 aa).

Cystine bridges form between cysteine 2/cysteine 17, cysteine 9/cysteine 24, and cysteine 16/cysteine 31.

It belongs to the neurotoxin 10 (Hwtx-1) family. 10 (haplotoxin-1) subfamily. As to expression, expressed by the venom gland.

The protein resides in the secreted. In terms of biological role, spider venom neurotoxin that blocks voltage-gated sodium channel Nav1.3/SCN3A in human (IC(50)=1 uM) and rat (IC(50)=1 uM). The chain is Beta-theraphotoxin-Hlv1a from Cyriopagopus lividus (Cobalt blue tarantula).